The chain runs to 134 residues: Small ribosomal subunit protein uS8c (134 aa).

The protein belongs to the universal ribosomal protein uS8 family. Part of the 30S ribosomal subunit.

It localises to the plastid. Its function is as follows. One of the primary rRNA binding proteins, it binds directly to 16S rRNA central domain where it helps coordinate assembly of the platform of the 30S subunit. In Cuscuta reflexa (Southern Asian dodder), this protein is Small ribosomal subunit protein uS8c (rps8).